The sequence spans 62 residues: MQEEKNKEILLKDIENQIPYSKPFGVYDQLKKRIFRFILGVILLGVIIESITLLVVYFKDKK.

The helical transmembrane segment at 37–57 (FILGVILLGVIIESITLLVVY) threads the bilayer.

The protein localises to the membrane. This is an uncharacterized protein from Dictyostelium discoideum (Social amoeba).